The primary structure comprises 186 residues: Lipid A palmitoyltransferase PagP (186 aa).

The N-terminal stretch at 1-25 (MNVSKYVAIFSFVFIQLISVGKVFA) is a signal peptide. Catalysis depends on residues histidine 58, aspartate 101, and serine 102.

The protein belongs to the lipid A palmitoyltransferase family. In terms of assembly, homodimer.

It is found in the cell outer membrane. The catalysed reaction is lipid A (E. coli) + a 1-hexadecanoyl-2-acyl-sn-glycero-3-phosphocholine = hepta-acyl lipid A (E. coli) + a 2-acyl-sn-glycero-3-phosphocholine. It catalyses the reaction lipid IIA + a 1-hexadecanoyl-2-acyl-sn-glycero-3-phosphocholine = lipid IIB + a 2-acyl-sn-glycero-3-phosphocholine. The enzyme catalyses lipid IVA (E. coli) + a 1-hexadecanoyl-2-acyl-sn-glycero-3-phosphocholine = lipid IVB (E. coli) + a 2-acyl-sn-glycero-3-phosphocholine. Inhibited by lauryldimethylamine oxide (LDAO) and dodecylphosphocholine (DPC). Its function is as follows. Transfers a palmitate residue from the sn-1 position of a phospholipid to the N-linked hydroxymyristate on the proximal unit of lipid A or its precursors. Phosphatidylglycerol (PtdGro), phosphatidylethanolamine (PtdEtn), phosphatidylserine (PtdSer) and phosphatidic acid (Ptd-OH) are all effective acyl donors. This is Lipid A palmitoyltransferase PagP from Escherichia coli (strain K12).